Here is a 443-residue protein sequence, read N- to C-terminus: Xaa-Pro dipeptidase (443 aa).

Residues Asp246, Asp257, His339, Glu384, and Glu423 each contribute to the Mn(2+) site.

It belongs to the peptidase M24B family. Bacterial-type prolidase subfamily. Requires Mn(2+) as cofactor.

It carries out the reaction Xaa-L-Pro dipeptide + H2O = an L-alpha-amino acid + L-proline. Splits dipeptides with a prolyl residue in the C-terminal position. The sequence is that of Xaa-Pro dipeptidase from Yersinia pseudotuberculosis serotype I (strain IP32953).